We begin with the raw amino-acid sequence, 640 residues long: 1-deoxy-D-xylulose-5-phosphate synthase (640 aa).

Thiamine diphosphate-binding positions include His72 and 113 to 115 (GHA). Asp144 contacts Mg(2+). Thiamine diphosphate-binding positions include 145–146 (GA), Asn174, Tyr287, and Glu370. Asn174 provides a ligand contact to Mg(2+).

The protein belongs to the transketolase family. DXPS subfamily. In terms of assembly, homodimer. Mg(2+) serves as cofactor. Thiamine diphosphate is required as a cofactor.

The catalysed reaction is D-glyceraldehyde 3-phosphate + pyruvate + H(+) = 1-deoxy-D-xylulose 5-phosphate + CO2. It participates in metabolic intermediate biosynthesis; 1-deoxy-D-xylulose 5-phosphate biosynthesis; 1-deoxy-D-xylulose 5-phosphate from D-glyceraldehyde 3-phosphate and pyruvate: step 1/1. Its function is as follows. Catalyzes the acyloin condensation reaction between C atoms 2 and 3 of pyruvate and glyceraldehyde 3-phosphate to yield 1-deoxy-D-xylulose-5-phosphate (DXP). The sequence is that of 1-deoxy-D-xylulose-5-phosphate synthase from Synechococcus sp. (strain RCC307).